Here is a 1960-residue protein sequence, read N- to C-terminus: Myosin-9 (1960 aa).

Position 2 is an N-acetylalanine (A2). Residues 2–838 (AQQAADKYLY…RLFTKVKPLL (837 aa)) are mediates interaction with LIMCH1. K8 bears the N6-acetyllysine mark. The residue at position 11 (Y11) is a Phosphotyrosine. One can recognise a Myosin N-terminal SH3-like domain in the interval 27-77 (AAKKLVWVPSDKSGFEPASLKEEVGEEAIVELVENGKKVKVNKDDIQKMNP). The Myosin motor domain maps to 81–776 (SKVEDMAELT…VLAHLEEERD (696 aa)). N6-acetyllysine is present on K102. Residue 174-181 (GESGAGKT) participates in ATP binding. N6-acetyllysine is present on residues K299, K435, and K613. At S628 the chain carries Phosphoserine. Residues 654-676 (LAKLMATLRNTNPNFVRCIIPNH) are actin-binding. A Phosphotyrosine modification is found at Y754. An IQ domain is found at 779–808 (ITDVIIGFQACCRGYLARKAFAKRQQQLTA). A coiled-coil region spans residues 837–1926 (LLQVSRQEEE…LKNKLRRGDL (1090 aa)). K850 is subject to N6-succinyllysine. N6-acetyllysine is present on residues K860, K975, and K1024. A compositionally biased stretch (basic and acidic residues) spans 1035 to 1055 (RLRREEKQRQELEKTRRKLEG). Positions 1035-1057 (RLRREEKQRQELEKTRRKLEGDS) are disordered. Phosphoserine is present on S1114. Residues 1118 to 1137 (EDLESERASRNKAEKQKRDL) are disordered. A compositionally biased stretch (basic and acidic residues) spans 1122 to 1137 (SERASRNKAEKQKRDL). Residues K1234, K1249, K1357, K1392, K1404, K1410, K1459, and K1638 each carry the N6-acetyllysine modification. Residue K1669 is modified to N6-succinyllysine. S1714 is modified (phosphoserine). Residues K1793, K1802, and K1845 each carry the N6-acetyllysine modification. A disordered region spans residues 1877–1960 (RQLEEAEEEA…ADGAEAKPAE (84 aa)). Residue R1923 is modified to Omega-N-methylarginine. Position 1943 is a phosphoserine (S1943). A compositionally biased stretch (basic and acidic residues) spans 1948-1960 (DGKADGAEAKPAE).

The protein belongs to the TRAFAC class myosin-kinesin ATPase superfamily. Myosin family. In terms of assembly, myosin is a hexameric protein that consists of 2 heavy chain subunits (MHC), 2 alkali light chain subunits (MLC) and 2 regulatory light chain subunits (MLC-2). Interacts with RASIP1. Interacts with DDR1. Interacts with PDLIM2. Interacts with SVIL. Interacts with HTRA3. Interacts with Myo7a. Interacts with CFAP95. Interacts with LIMCH1; independently of the integration of MYH9 into the myosin complex. Interacts with RAB3A. Interacts with ZBED4. Interacts with S100A4; this interaction increases cell motility. (Microbial infection) Interacts with herpes simplex virus 1/HHV-1 envelope glycoprotein B. In terms of processing, ISGylated. Ubiquitination. In terms of tissue distribution, in the kidney, expressed in the glomeruli. Also expressed in leukocytes.

It localises to the cytoplasm. The protein localises to the cytoskeleton. It is found in the cell cortex. Its subcellular location is the cytoplasmic vesicle. The protein resides in the secretory vesicle. It localises to the cortical granule. The protein localises to the cell membrane. Its function is as follows. Cellular myosin that appears to play a role in cytokinesis, cell shape, and specialized functions such as secretion and capping. Required for cortical actin clearance prior to oocyte exocytosis. Promotes cell motility in conjunction with S100A4. During cell spreading, plays an important role in cytoskeleton reorganization, focal contact formation (in the margins but not the central part of spreading cells), and lamellipodial retraction; this function is mechanically antagonized by MYH10. (Microbial infection) Acts as a receptor for herpes simplex virus 1/HHV-1 envelope glycoprotein B. The chain is Myosin-9 (MYH9) from Homo sapiens (Human).